A 93-amino-acid polypeptide reads, in one-letter code: Small ribosomal subunit protein uS19 (93 aa).

It belongs to the universal ribosomal protein uS19 family.

In terms of biological role, protein S19 forms a complex with S13 that binds strongly to the 16S ribosomal RNA. The polypeptide is Small ribosomal subunit protein uS19 (Mycolicibacterium smegmatis (strain ATCC 700084 / mc(2)155) (Mycobacterium smegmatis)).